We begin with the raw amino-acid sequence, 888 residues long: Semaphorin-6B (888 aa).

The first 25 residues, 1-25 (MQTPRASPPRPALLLLLLLLGGAHG), serve as a signal peptide directing secretion. Residues 26–603 (LFPEEPPPLS…VSVNLLVTSS (578 aa)) are Extracellular-facing. Residues 31–523 (PPPLSVAPRD…FPRCVVRVPV (493 aa)) form the Sema domain. N74 carries N-linked (GlcNAc...) asparagine glycosylation. 2 cysteine pairs are disulfide-bonded: C116–C126 and C144–C153. 3 N-linked (GlcNAc...) asparagine glycosylation sites follow: N155, N167, and N291. Intrachain disulfides connect C267-C378 and C292-C337. 3 N-linked (GlcNAc...) asparagine glycosylation sites follow: N386, N441, and N462. 4 cysteine pairs are disulfide-bonded: C486–C517, C526–C544, C532–C578, and C536–C552. Residues 604–624 (VAAFVVGAVVSGFSVGWFVGL) form a helical membrane-spanning segment. Residues 625–888 (RERRELARRK…GADRTAPPVP (264 aa)) lie on the Cytoplasmic side of the membrane. Disordered regions lie at residues 651–679 (VSRLGERRAQGPGGRGGGGGGGAGVPPEA), 695–742 (LQGG…HPLL), and 757–888 (RAPE…PPVP). The segment covering 661 to 674 (GPGGRGGGGGGGAG) has biased composition (gly residues). Omega-N-methylarginine is present on R665. The span at 706 to 717 (LLPTPEQTPLPQ) shows a compositional bias: low complexity.

This sequence belongs to the semaphorin family. In terms of assembly, (Microbial infection) Interacts with P.sordellii toxin TcsL; semaphorins SEMA6A and SEMA6B constitute the major host receptors for TcsL in the vascular endothelium. In terms of tissue distribution, expressed in the brain in GABAergic neurons.

The protein localises to the cell membrane. Functions as a cell surface repellent for mossy fibers of developing neurons in the hippocampus where it plays a role in axon guidance. May function through the PLXNA4 receptor expressed by mossy cell axons. Functionally, (Microbial infection) Acts as a receptor for P.sordellii toxin TcsL in the in the vascular endothelium. The chain is Semaphorin-6B (SEMA6B) from Homo sapiens (Human).